We begin with the raw amino-acid sequence, 187 residues long: MKNSELLKIIWALKNGEIIAYPAESVFSLGCDPDNDKTIQKLLTLKNRSWEKGFILVSDNYDKLTKYIDDKKLTKFQKRIISFHDTFFPRTWVVPAKKCVSKLITGQFKSIAIRISRFEYIKNICLNYGKPIISTSANISNDAPCRTKNEVAKKFNQCVRTMNGKTLGNFQHSIVQDLLNGYLYRKR.

The YrdC-like domain occupies 3 to 187; the sequence is NSELLKIIWA…LLNGYLYRKR (185 aa).

This sequence belongs to the SUA5 family. TsaC subfamily.

The protein resides in the cytoplasm. It carries out the reaction L-threonine + hydrogencarbonate + ATP = L-threonylcarbamoyladenylate + diphosphate + H2O. In terms of biological role, required for the formation of a threonylcarbamoyl group on adenosine at position 37 (t(6)A37) in tRNAs that read codons beginning with adenine. Catalyzes the conversion of L-threonine, HCO(3)(-)/CO(2) and ATP to give threonylcarbamoyl-AMP (TC-AMP) as the acyladenylate intermediate, with the release of diphosphate. The polypeptide is Threonylcarbamoyl-AMP synthase (Riesia pediculicola (strain USDA)).